The chain runs to 572 residues: Sulfite reductase [NADPH] hemoprotein beta-component (572 aa).

[4Fe-4S] cluster contacts are provided by Cys437, Cys443, Cys482, and Cys486. Position 486 (Cys486) interacts with siroheme.

The protein belongs to the nitrite and sulfite reductase 4Fe-4S domain family. Alpha(8)-beta(8). The alpha component is a flavoprotein, the beta component is a hemoprotein. Requires siroheme as cofactor. [4Fe-4S] cluster serves as cofactor.

The catalysed reaction is hydrogen sulfide + 3 NADP(+) + 3 H2O = sulfite + 3 NADPH + 4 H(+). It participates in sulfur metabolism; hydrogen sulfide biosynthesis; hydrogen sulfide from sulfite (NADPH route): step 1/1. Functionally, component of the sulfite reductase complex that catalyzes the 6-electron reduction of sulfite to sulfide. This is one of several activities required for the biosynthesis of L-cysteine from sulfate. This is Sulfite reductase [NADPH] hemoprotein beta-component from Lysinibacillus sphaericus (strain C3-41).